The sequence spans 350 residues: tRNA-splicing endonuclease (350 aa).

Residues Tyr286, His297, and Lys328 contribute to the active site.

The protein belongs to the tRNA-intron endonuclease family. Archaeal long subfamily. In terms of assembly, homodimer.

It carries out the reaction pretRNA = a 3'-half-tRNA molecule with a 5'-OH end + a 5'-half-tRNA molecule with a 2',3'-cyclic phosphate end + an intron with a 2',3'-cyclic phosphate and a 5'-hydroxyl terminus.. In terms of biological role, endonuclease that removes tRNA introns. Cleaves pre-tRNA at the 5'- and 3'-splice sites to release the intron. The products are an intron and two tRNA half-molecules bearing 2',3' cyclic phosphate and 5'-OH termini. Recognizes a pseudosymmetric substrate in which 2 bulged loops of 3 bases are separated by a stem of 4 bp. This Methanosarcina acetivorans (strain ATCC 35395 / DSM 2834 / JCM 12185 / C2A) protein is tRNA-splicing endonuclease.